Reading from the N-terminus, the 425-residue chain is SWI/SNF and RSC complexes subunit ssr3 (425 aa).

Residues 1–16 show a composition bias toward polar residues; the sequence is MSNNSRLPENGVQSGN. The interval 1–23 is disordered; sequence MSNNSRLPENGVQSGNGEDAELK. The 78-residue stretch at 201–278 folds into the SWIB/MDM2 domain; that stretch reads EHPERYKLSK…PELMNRFLEP (78 aa).

The protein belongs to the SMARCD family. As to quaternary structure, component of the RSC complex composed of at least arp9, arp42, rsc1, rsc4, rsc7, rsc9, rsc58, sfh1, snf21, ssr1, ssr2, ssr3 and ssr4. The complex interacts with histone and histone variant components of centromeric chromatin. Component of the SWI/SNF global transcription activator complex composed of at least arp9, arp42, snf5, snf22, snf30, sbf59, sol1, ssr1, ssr2, ssr3, ssr4 and tfg3.

The protein resides in the cytoplasm. Its subcellular location is the nucleus. Its function is as follows. Component of the chromatin structure remodeling complex (RSC), which is involved in transcription regulation and nucleosome positioning. Controls particularly membrane and organelle development genes. Part of the SWI/SNF complex, an ATP-dependent chromatin remodeling complex, required for the positive and negative regulation of gene expression of a large number of genes. It changes chromatin structure by altering DNA-histone contacts within a nucleosome, leading eventually to a change in nucleosome position, thus facilitating or repressing binding of gene-specific transcription factors. In Schizosaccharomyces pombe (strain 972 / ATCC 24843) (Fission yeast), this protein is SWI/SNF and RSC complexes subunit ssr3 (ssr3).